The primary structure comprises 1755 residues: Periplakin (1755 aa).

The segment covering 1–11 (MHSLFRKRNKG) has biased composition (basic residues). A disordered region spans residues 1-20 (MHSLFRKRNKGKYSPTVQTR). A Phosphoserine modification is found at Ser-14. Coiled-coil stretches lie at residues 16–125 (TVQT…KQMY) and 182–387 (LAKD…QQVV). Spectrin repeat units lie at residues 214-315 (QDYM…SHLK), 321-483 (HQFH…HALQ), and 503-610 (RQLL…EKVD). The region spanning 397–453 (LKPIPVEALCDFESDQGLISRGYSYTLQKNNGESWELTDSTGKKLAAPAVCFIIPPT) is the SH3 domain. Residue Ser-463 is modified to Phosphoserine. Coiled-coil stretches lie at residues 611–819 (VANR…RNSH) and 883–1644 (LSSG…SVAV). A phosphoserine mark is found at Ser-885, Ser-947, Ser-1583, and Ser-1656. Residues 1556–1755 (ELDFLREENH…ELAVLVSGQK (200 aa)) form an interacts with BFSP2 and VIM region. Plectin repeat units follow at residues 1650-1684 (ENHLRRSIVVIDPDTGRELSPEEAHRAGLIDWKMF) and 1699-1734 (VKGPNGESSVIHDRKSGKKFSIEDALQSGRLTAAQY).

Belongs to the plakin or cytolinker family. As to quaternary structure, homodimer or a heterodimer with EVPL. Found in a complex composed of PPL (via C-terminal linker domain), BFSP1 and BFSP2 in the retinal lens. Within the complex interacts (via C-terminal linker domain) with BFSP2. Interacts with VIM. Binds to the PH domain of AKT1. Interacts with FCGR1A. May interact with PPHLN1. As to expression, expressed in the retinal lens (at protein level).

The protein localises to the cell junction. Its subcellular location is the desmosome. It is found in the cytoplasm. It localises to the cytoskeleton. The protein resides in the cell membrane. Functionally, component of the cornified envelope of keratinocytes. May link the cornified envelope to desmosomes and intermediate filaments. May act as a localization signal in PKB/AKT-mediated signaling. The protein is Periplakin (Ppl) of Mus musculus (Mouse).